The primary structure comprises 450 residues: UDP-N-acetylmuramoylalanine--D-glutamate ligase (450 aa).

119 to 125 (GSNGKTT) is an ATP binding site.

The protein belongs to the MurCDEF family.

It is found in the cytoplasm. The enzyme catalyses UDP-N-acetyl-alpha-D-muramoyl-L-alanine + D-glutamate + ATP = UDP-N-acetyl-alpha-D-muramoyl-L-alanyl-D-glutamate + ADP + phosphate + H(+). It participates in cell wall biogenesis; peptidoglycan biosynthesis. Functionally, cell wall formation. Catalyzes the addition of glutamate to the nucleotide precursor UDP-N-acetylmuramoyl-L-alanine (UMA). This Streptococcus pneumoniae (strain CGSP14) protein is UDP-N-acetylmuramoylalanine--D-glutamate ligase.